We begin with the raw amino-acid sequence, 145 residues long: Late embryogenesis abundant protein D-11 (145 aa).

Residues 1–18 (MAHFQNQYSAPEVTQTDA) are compositionally biased toward polar residues. The disordered stretch occupies residues 1–136 (MAHFQNQYSA…EAPWSPQPLI (136 aa)). A compositionally biased stretch (basic residues) spans 47-57 (GHHHGGHHGLH). Low complexity predominate over residues 58 to 68 (RTGSSSSSSSS). The span at 82 to 96 (KERLKEKIPGNKEHQ) shows a compositional bias: basic and acidic residues. Positions 97-107 (SQATSTTTPGQ) are enriched in polar residues.

Belongs to the plant dehydrin family.

In terms of biological role, LEA protein are late embryogenesis abundant in higher plant seed embryos. There are two subsets of LEA proteins (5a, and 5b), the first ones are expressed when the cotyledon weight reach 80 mg and the second set are expressed above 100 mg. The function of those proteins is not known. This Gossypium hirsutum (Upland cotton) protein is Late embryogenesis abundant protein D-11.